The primary structure comprises 1634 residues: Leucine-rich repeat-containing protein 37A3 (1634 aa).

The signal sequence occupies residues 1–35 (MTSAQCPALACVMSPLRFWGPWPLLMWQLLWLLVK). The Extracellular segment spans residues 36 to 1581 (EAQPLEWVKD…ELPGYGYTKK (1546 aa)). Disordered regions lie at residues 53 to 104 (PLGP…ESTE), 129 to 154 (SQQDLKDKLSPQERLPVSPKKLKKDP), 172 to 531 (TPQS…VVVA), 619 to 642 (PEPTTEVGHSTPPKRTIVSPKHPE), and 758 to 777 (EPTTETGHSTALEKTTAPRP). One copy of the LRR 1 repeat lies at 137 to 160 (LSPQERLPVSPKKLKKDPAQRWSL). 2 stretches are compositionally biased toward polar residues: residues 172 to 189 (TPQSQKQTLQNEYSSTDT) and 223 to 237 (ETQNPETLEDIQSSS). LRR repeat units lie at residues 230 to 253 (LEDIQSSSLQQEAPAQLPQLLEEE) and 267 to 290 (ESSMESLTLPNHEVSVQPPGEDQA). The span at 238-249 (LQQEAPAQLPQL) shows a compositional bias: low complexity. Residue Asn-296 is glycosylated (N-linked (GlcNAc...) asparagine). Residues 307-326 (TITSEPTNETESSQAQQETP) show a composition bias toward polar residues. Low complexity predominate over residues 358-368 (SEQQQPVQPSE). Residues 433-446 (LVHQEATTRLSGSG) show a composition bias toward polar residues. The segment covering 482–493 (SPEPINNENPSP) has biased composition (low complexity). Over residues 760 to 770 (TTETGHSTALE) the composition is skewed to polar residues. LRR repeat units follow at residues 864–887 (NGTFTILNFQGNYISYIDGNVWKA), 888–911 (YSWTEKLILRENNLTELHKDSFEG), 912–935 (LLSLQYLDLSCNKIQSIERHTFEP), 937–959 (PFLKFINLSCNVITELSFGTFQA), 963–987 (MQFLHKLILNHNPLTTVEDPYLFKL), and 1002–1027 (LTTLKNILMMTVELEKLIVPSHMACC). The N-linked (GlcNAc...) asparagine glycan is linked to Asn-1079. LRR repeat units follow at residues 1124 to 1146 (LPYFSAVNLDVKSLLLPFIKLPT) and 1151 to 1176 (LAKIQTVGKNRQRLNRVLMGPRSIQK). Composition is skewed to basic and acidic residues over residues 1181–1191 (EVGRQSIRREQ) and 1201–1216 (AEEKRLGSPAPRELKQ). Disordered stretches follow at residues 1181–1227 (EVGR…EKLA) and 1306–1329 (RFHKTRSRMTHRTPKVKKSPKVRK). The LRR 12 repeat unit spans residues 1359 to 1384 (FSSLRDLSPQENPFLEVSAPSEHFIE). Residues 1582–1602 (LILALIVTGILTILIILLCLI) traverse the membrane as a helical segment. Residues 1603-1634 (EICCHRRSLQEDEEGFSRDSEAPTEEESEALP) lie on the Cytoplasmic side of the membrane. Residues 1614-1634 (DEEGFSRDSEAPTEEESEALP) form a disordered region. Over residues 1624–1634 (APTEEESEALP) the composition is skewed to acidic residues.

Belongs to the LRRC37A family.

It is found in the membrane. The chain is Leucine-rich repeat-containing protein 37A3 (LRRC37A3) from Homo sapiens (Human).